Here is a 223-residue protein sequence, read N- to C-terminus: Phosphoribosylformylglycinamidine synthase subunit PurQ (223 aa).

Residues 3 to 223 (SAVILLPGLN…LFAGALGITA (221 aa)) form the Glutamine amidotransferase type-1 domain. Cys-87 functions as the Nucleophile in the catalytic mechanism. Active-site residues include His-197 and Glu-199.

In terms of assembly, part of the FGAM synthase complex composed of 1 PurL, 1 PurQ and 2 PurS subunits.

The protein localises to the cytoplasm. It catalyses the reaction N(2)-formyl-N(1)-(5-phospho-beta-D-ribosyl)glycinamide + L-glutamine + ATP + H2O = 2-formamido-N(1)-(5-O-phospho-beta-D-ribosyl)acetamidine + L-glutamate + ADP + phosphate + H(+). The catalysed reaction is L-glutamine + H2O = L-glutamate + NH4(+). It functions in the pathway purine metabolism; IMP biosynthesis via de novo pathway; 5-amino-1-(5-phospho-D-ribosyl)imidazole from N(2)-formyl-N(1)-(5-phospho-D-ribosyl)glycinamide: step 1/2. In terms of biological role, part of the phosphoribosylformylglycinamidine synthase complex involved in the purines biosynthetic pathway. Catalyzes the ATP-dependent conversion of formylglycinamide ribonucleotide (FGAR) and glutamine to yield formylglycinamidine ribonucleotide (FGAM) and glutamate. The FGAM synthase complex is composed of three subunits. PurQ produces an ammonia molecule by converting glutamine to glutamate. PurL transfers the ammonia molecule to FGAR to form FGAM in an ATP-dependent manner. PurS interacts with PurQ and PurL and is thought to assist in the transfer of the ammonia molecule from PurQ to PurL. In Brucella suis biovar 1 (strain 1330), this protein is Phosphoribosylformylglycinamidine synthase subunit PurQ.